The primary structure comprises 407 residues: Peptidase T (407 aa).

Residue H77 coordinates Zn(2+). Residue D79 is part of the active site. D140 lines the Zn(2+) pocket. Residue E174 is the Proton acceptor of the active site. E175, D197, and H379 together coordinate Zn(2+).

This sequence belongs to the peptidase M20B family. It depends on Zn(2+) as a cofactor.

Its subcellular location is the cytoplasm. It catalyses the reaction Release of the N-terminal residue from a tripeptide.. Functionally, cleaves the N-terminal amino acid of tripeptides. The protein is Peptidase T of Bacteroides fragilis (strain YCH46).